A 155-amino-acid chain; its full sequence is Large ribosomal subunit protein uL13 (155 aa).

It belongs to the universal ribosomal protein uL13 family. As to quaternary structure, part of the 50S ribosomal subunit.

This protein is one of the early assembly proteins of the 50S ribosomal subunit, although it is not seen to bind rRNA by itself. It is important during the early stages of 50S assembly. This is Large ribosomal subunit protein uL13 from Rickettsia conorii (strain ATCC VR-613 / Malish 7).